A 264-amino-acid chain; its full sequence is Sec-independent protein translocase protein TatC (264 aa).

Transmembrane regions (helical) follow at residues 20–40 (VVVI…EPAE), 85–105 (FFAQ…PVAV), 131–151 (AVGL…PYIL), 175–195 (FVLQ…VMFA), 211–231 (IRYA…DGSG), and 232–252 (VTMW…MFFA).

Belongs to the TatC family. As to quaternary structure, forms a complex with TatA.

Its subcellular location is the cell membrane. Its function is as follows. Part of the twin-arginine translocation (Tat) system that transports large folded proteins containing a characteristic twin-arginine motif in their signal peptide across membranes. This Cenarchaeum symbiosum (strain A) protein is Sec-independent protein translocase protein TatC.